The chain runs to 667 residues: YTH domain-containing protein ECT2 (667 aa).

2 disordered regions span residues 264–305 (QRPV…PSSV) and 379–398 (NELNRGPRAKGTKNQKGNLD). Residues 267 to 285 (VSGSGVASSYSKSSTVPSS) are compositionally biased toward low complexity. Over residues 286–305 (RNQNYRSNSHYTSVHQPSSV) the composition is skewed to polar residues. One can recognise a YTH domain in the interval 442–579 (AMFFIIKSYS…EQGLKIVKIF (138 aa)). Residues 448-450 (KSY), D454, 464-465 (WA), N497, W521, W526, and W534 contribute to the RNA site. Positions 606-667 (KAKQTQKQVS…VTGDVVANGC (62 aa)) are disordered. A compositionally biased stretch (basic and acidic residues) spans 614–627 (VSEEKVTDEKKESA). The segment covering 628-639 (TAESASKESPAA) has biased composition (low complexity).

Interacts (via C-terminus) with CIPK1. Expressed in the shoot apex, at the sites of leaf formation, and in emerging leaves. Highly expressed in rapidly developing tissues.

It localises to the cytoplasm. It is found in the nucleus. Its function is as follows. Specifically recognizes and binds N6-methyladenosine (m6A)-containing RNAs, and regulates mRNA stability. M6A is a modification present at internal sites of mRNAs and some non-coding RNAs and plays a role in mRNA stability and processing. Binds preferentially in the 3'UTRs of target genes. May play dual roles in regulating 3'UTR processing in the nucleus and facilitating mRNA stability in the cytoplasm. Required for the correct timing of leaf formation and normal leaf morphology. Functions redundantly with ECT3. Required for proper trichome branching and morphology. Controls trichome morphology by binding transcripts related to trichome morphogenesis and affecting their stability. This is YTH domain-containing protein ECT2 from Arabidopsis thaliana (Mouse-ear cress).